We begin with the raw amino-acid sequence, 227 residues long: Cytochrome c oxidase subunit 2 (227 aa).

Residues methionine 1–serine 14 are Mitochondrial intermembrane-facing. A helical membrane pass occupies residues proline 15–methionine 45. At leucine 46–glutamine 59 the chain is on the mitochondrial matrix side. A helical membrane pass occupies residues glutamate 60–methionine 87. The Mitochondrial intermembrane segment spans residues aspartate 88–isoleucine 227. Cu cation-binding residues include histidine 161, cysteine 196, glutamate 198, cysteine 200, histidine 204, and methionine 207. Glutamate 198 provides a ligand contact to Mg(2+).

It belongs to the cytochrome c oxidase subunit 2 family. Component of the cytochrome c oxidase (complex IV, CIV), a multisubunit enzyme composed of 14 subunits. The complex is composed of a catalytic core of 3 subunits MT-CO1, MT-CO2 and MT-CO3, encoded in the mitochondrial DNA, and 11 supernumerary subunits COX4I, COX5A, COX5B, COX6A, COX6B, COX6C, COX7A, COX7B, COX7C, COX8 and NDUFA4, which are encoded in the nuclear genome. The complex exists as a monomer or a dimer and forms supercomplexes (SCs) in the inner mitochondrial membrane with NADH-ubiquinone oxidoreductase (complex I, CI) and ubiquinol-cytochrome c oxidoreductase (cytochrome b-c1 complex, complex III, CIII), resulting in different assemblies (supercomplex SCI(1)III(2)IV(1) and megacomplex MCI(2)III(2)IV(2)). Found in a complex with TMEM177, COA6, COX18, COX20, SCO1 and SCO2. Interacts with TMEM177 in a COX20-dependent manner. Interacts with COX20. Interacts with COX16. Cu cation serves as cofactor.

Its subcellular location is the mitochondrion inner membrane. The catalysed reaction is 4 Fe(II)-[cytochrome c] + O2 + 8 H(+)(in) = 4 Fe(III)-[cytochrome c] + 2 H2O + 4 H(+)(out). Its function is as follows. Component of the cytochrome c oxidase, the last enzyme in the mitochondrial electron transport chain which drives oxidative phosphorylation. The respiratory chain contains 3 multisubunit complexes succinate dehydrogenase (complex II, CII), ubiquinol-cytochrome c oxidoreductase (cytochrome b-c1 complex, complex III, CIII) and cytochrome c oxidase (complex IV, CIV), that cooperate to transfer electrons derived from NADH and succinate to molecular oxygen, creating an electrochemical gradient over the inner membrane that drives transmembrane transport and the ATP synthase. Cytochrome c oxidase is the component of the respiratory chain that catalyzes the reduction of oxygen to water. Electrons originating from reduced cytochrome c in the intermembrane space (IMS) are transferred via the dinuclear copper A center (CU(A)) of subunit 2 and heme A of subunit 1 to the active site in subunit 1, a binuclear center (BNC) formed by heme A3 and copper B (CU(B)). The BNC reduces molecular oxygen to 2 water molecules using 4 electrons from cytochrome c in the IMS and 4 protons from the mitochondrial matrix. This Zelotomys hildegardeae (Hildegarde's broad-headed mouse) protein is Cytochrome c oxidase subunit 2 (MT-CO2).